The chain runs to 442 residues: tRNA modification GTPase MnmE (442 aa).

3 residues coordinate (6S)-5-formyl-5,6,7,8-tetrahydrofolate: R21, E79, and K118. The TrmE-type G domain occupies 214–367; the sequence is GFKIAIVGKP…LKEELQNYLN (154 aa). N224 is a K(+) binding site. GTP contacts are provided by residues 224 to 229, 243 to 249, and 268 to 271; these read NVGKSS, SDIAGTT, and DTAG. S228 contacts Mg(2+). K(+) is bound by residues S243, I245, and T248. T249 is a Mg(2+) binding site. K442 serves as a coordination point for (6S)-5-formyl-5,6,7,8-tetrahydrofolate.

Belongs to the TRAFAC class TrmE-Era-EngA-EngB-Septin-like GTPase superfamily. TrmE GTPase family. In terms of assembly, homodimer. Heterotetramer of two MnmE and two MnmG subunits. Requires K(+) as cofactor.

It is found in the cytoplasm. Its function is as follows. Exhibits a very high intrinsic GTPase hydrolysis rate. Involved in the addition of a carboxymethylaminomethyl (cmnm) group at the wobble position (U34) of certain tRNAs, forming tRNA-cmnm(5)s(2)U34. The polypeptide is tRNA modification GTPase MnmE (Campylobacter jejuni (strain RM1221)).